A 198-amino-acid chain; its full sequence is Ribonuclease HII (198 aa).

Residues 10–198 enclose the RNase H type-2 domain; it reads QLVAGVDEVG…PVKRALGLAS (189 aa). Positions 16, 17, and 108 each coordinate a divalent metal cation.

This sequence belongs to the RNase HII family. Mn(2+) is required as a cofactor. Requires Mg(2+) as cofactor.

It localises to the cytoplasm. It carries out the reaction Endonucleolytic cleavage to 5'-phosphomonoester.. Endonuclease that specifically degrades the RNA of RNA-DNA hybrids. This chain is Ribonuclease HII, found in Escherichia coli O45:K1 (strain S88 / ExPEC).